Reading from the N-terminus, the 470-residue chain is Aminoacyl transferase sphA (470 aa).

S212, H244, and T272 together coordinate pyridoxal 5'-phosphate. The residue at position 275 (K275) is an N6-(pyridoxal phosphate)lysine.

This sequence belongs to the class-II pyridoxal-phosphate-dependent aminotransferase family. BioF subfamily. As to quaternary structure, homodimer. It depends on pyridoxal 5'-phosphate as a cofactor.

It catalyses the reaction aminomalonate + (3R)-hydroxyoctadeca-4,10-dienoyl-[ACP] = 3-oxopresphingofungin + holo-[ACP] + CO2. Its pathway is secondary metabolite biosynthesis. Functionally, aminoacyl transferase; part of the gene cluster that mediates the biosynthesis of sphingofungins, bioactive molecules acting as sphingolipid inhibitors via inhibiting serine palmitoyl transferase (SPT). Within the pathway, sphA transfers aminomalonate onto the sphB product 3-hydroxyoctadeca-4,10-dienoyl-ACP to produce 3-keto-presphingofungin. The substrate specificity of sphA using only aminomalonate in Aspergillus fumigatus is responsible for the biosynthesis of sphingofungins B and C but not E and F like in Byssochlamys spectabilis. The PKS sphB does not contain any putative thioesterase domain for releasing the nascent polyketide chain and it has been suggested that aminoacyl transferases can facilitate the polyketide chain release. Sphingofungin biosynthesis starts with the PKS sphB that produces an C18 polyketide precursor 3-hydroxyoctadeca-4,10-dienoyl-ACP containing one delta-6 desaturation and one delta-12 desaturation. The aminoacyl transferase sphA uses the sphB product to produce 3-keto-presphingofungin by adding an aminomalonate molecule. SphF then reduces the C-3 ketone of 3-keto-presphingofungin which leads to presphingofungin. The cytochrome P450 monooxygenase sphH converts presphingofungin into sphingofungin B1 which is further converted to sphingofungin B by the dioxygenase sphC. SphC is also able to convert presphingofungin into sphingofungin B2. The acetyltransferase sphE acetylates sphingofungin B to produce sphingofungin C, but can also convert sphingofungin B1 into sphingofungin C1 and sphingofungin B2 into sphingofungin C2. Finally, sphingofungin C can be spontaneously converted into sphingofungin D. This is Aminoacyl transferase sphA from Aspergillus fumigatus (strain CBS 144.89 / FGSC A1163 / CEA10) (Neosartorya fumigata).